Consider the following 376-residue polypeptide: Putative F-box protein At1g30930 (376 aa).

An F-box domain is found at 1 to 44 (MKNSIPIDLIIEIVSRSTAKSVARCHCVSKQWRAIFRRKYFIEL).

The sequence is that of Putative F-box protein At1g30930 from Arabidopsis thaliana (Mouse-ear cress).